The following is a 122-amino-acid chain: Small ribosomal subunit protein uS13 (122 aa).

The segment at 99-122 is disordered; sequence RGQRTHTNARTRKGPAKAIAGKKK.

This sequence belongs to the universal ribosomal protein uS13 family. As to quaternary structure, part of the 30S ribosomal subunit. Forms a loose heterodimer with protein S19. Forms two bridges to the 50S subunit in the 70S ribosome.

Functionally, located at the top of the head of the 30S subunit, it contacts several helices of the 16S rRNA. In the 70S ribosome it contacts the 23S rRNA (bridge B1a) and protein L5 of the 50S subunit (bridge B1b), connecting the 2 subunits; these bridges are implicated in subunit movement. Contacts the tRNAs in the A and P-sites. This chain is Small ribosomal subunit protein uS13, found in Rhodopseudomonas palustris (strain TIE-1).